Consider the following 423-residue polypeptide: Lysosomal acid phosphatase (423 aa).

An N-terminal signal peptide occupies residues 1–30 (MAGKRSGWSRAALLQLLLGVNLVVMPPTQA). Residues 31-380 (RSLRFVTLLY…QVASGPADTE (350 aa)) lie on the Lumenal side of the membrane. His-42 (nucleophile) is an active-site residue. Residues Asn-92, Asn-133, Asn-167, Asn-177, Asn-191, and Asn-267 are each glycosylated (N-linked (GlcNAc...) asparagine). 3 disulfides stabilise this stretch: Cys-159-Cys-370, Cys-212-Cys-310, and Cys-345-Cys-349. Asp-287 serves as the catalytic Proton donor. N-linked (GlcNAc...) asparagine glycans are attached at residues Asn-322 and Asn-331. The chain crosses the membrane as a helical span at residues 381-401 (VIVALAVCGSILFLLIVLLLT). The Cytoplasmic portion of the chain corresponds to 402–423 (VLFRMQAQPPGYRHVADGEDHA).

This sequence belongs to the histidine acid phosphatase family. In terms of processing, the membrane-bound form is converted to the soluble form by sequential proteolytic processing. First, the C-terminal cytoplasmic tail is removed. Cleavage by a lysosomal protease releases the soluble form in the lysosome lumen.

It localises to the lysosome membrane. Its subcellular location is the lysosome lumen. It catalyses the reaction a phosphate monoester + H2O = an alcohol + phosphate. The protein is Lysosomal acid phosphatase (ACP2) of Pongo abelii (Sumatran orangutan).